Consider the following 155-residue polypeptide: MQSKTLQNWLHLQRIVRFGDTDAAGVIHFHQLLRWSHEAWEESLDRYGLKAVDVFPSSLGISTSTSVALPIVHCEADFFLPIGIGDKLNVQLVPVRLNIGSFEVQFTFQRREQNVAVALVRHRSIDSDSRRLCDLPEGIDRWLEASSLHRGVSAI.

Residue D22 is part of the active site.

It belongs to the 4-hydroxybenzoyl-CoA thioesterase family. DHNA-CoA hydrolase subfamily.

The enzyme catalyses 1,4-dihydroxy-2-naphthoyl-CoA + H2O = 1,4-dihydroxy-2-naphthoate + CoA + H(+). It functions in the pathway cofactor biosynthesis; phylloquinone biosynthesis. It participates in quinol/quinone metabolism; 1,4-dihydroxy-2-naphthoate biosynthesis; 1,4-dihydroxy-2-naphthoate from chorismate: step 7/7. In terms of biological role, catalyzes the hydrolysis of 1,4-dihydroxy-2-naphthoyl-CoA (DHNA-CoA) to 1,4-dihydroxy-2-naphthoate (DHNA), a reaction involved in phylloquinone (vitamin K1) biosynthesis. This is 1,4-dihydroxy-2-naphthoyl-CoA hydrolase from Prochlorococcus marinus (strain SARG / CCMP1375 / SS120).